Reading from the N-terminus, the 392-residue chain is Heat-inducible transcription repressor HrcA (392 aa).

Belongs to the HrcA family.

Its function is as follows. Negative regulator of class I heat shock genes (grpE-dnaK-dnaJ and groELS operons). Prevents heat-shock induction of these operons. The chain is Heat-inducible transcription repressor HrcA from Chlamydia trachomatis serovar A (strain ATCC VR-571B / DSM 19440 / HAR-13).